Consider the following 241-residue polypeptide: Large ribosomal subunit protein uL3 (241 aa).

It belongs to the universal ribosomal protein uL3 family. In terms of assembly, part of the 50S ribosomal subunit. Forms a cluster with proteins L14 and L19.

Functionally, one of the primary rRNA binding proteins, it binds directly near the 3'-end of the 23S rRNA, where it nucleates assembly of the 50S subunit. This Aquifex aeolicus (strain VF5) protein is Large ribosomal subunit protein uL3.